We begin with the raw amino-acid sequence, 401 residues long: Acetate kinase (401 aa).

Position 9 (asparagine 9) interacts with Mg(2+). Lysine 16 contacts ATP. Arginine 88 contributes to the substrate binding site. The active-site Proton donor/acceptor is the aspartate 147. Residues 207–211 (HLGNG), 282–284 (DCR), and 333–337 (GIGEN) contribute to the ATP site. Mg(2+) is bound at residue glutamate 388.

This sequence belongs to the acetokinase family. As to quaternary structure, homodimer. Mg(2+) serves as cofactor. Mn(2+) is required as a cofactor.

The protein resides in the cytoplasm. It catalyses the reaction acetate + ATP = acetyl phosphate + ADP. Its pathway is metabolic intermediate biosynthesis; acetyl-CoA biosynthesis; acetyl-CoA from acetate: step 1/2. In terms of biological role, catalyzes the formation of acetyl phosphate from acetate and ATP. Can also catalyze the reverse reaction. This chain is Acetate kinase, found in Haemophilus influenzae (strain PittGG).